We begin with the raw amino-acid sequence, 524 residues long: 2-isopropylmalate synthase (524 aa).

Residues 5–267 (VIIFDTTLRD…HTNIRHSEIH (263 aa)) form the Pyruvate carboxyltransferase domain. Mn(2+) is bound by residues aspartate 14, histidine 202, histidine 204, and asparagine 238. The regulatory domain stretch occupies residues 392 to 524 (KLEYLGVQSG…KTDKINTESV (133 aa)).

Belongs to the alpha-IPM synthase/homocitrate synthase family. LeuA type 1 subfamily. In terms of assembly, homodimer. Requires Mn(2+) as cofactor.

It localises to the cytoplasm. The catalysed reaction is 3-methyl-2-oxobutanoate + acetyl-CoA + H2O = (2S)-2-isopropylmalate + CoA + H(+). It functions in the pathway amino-acid biosynthesis; L-leucine biosynthesis; L-leucine from 3-methyl-2-oxobutanoate: step 1/4. Its function is as follows. Catalyzes the condensation of the acetyl group of acetyl-CoA with 3-methyl-2-oxobutanoate (2-ketoisovalerate) to form 3-carboxy-3-hydroxy-4-methylpentanoate (2-isopropylmalate). In Aeromonas hydrophila subsp. hydrophila (strain ATCC 7966 / DSM 30187 / BCRC 13018 / CCUG 14551 / JCM 1027 / KCTC 2358 / NCIMB 9240 / NCTC 8049), this protein is 2-isopropylmalate synthase.